The sequence spans 199 residues: Probable chemoreceptor glutamine deamidase CheD (199 aa).

The protein belongs to the CheD family.

The enzyme catalyses L-glutaminyl-[protein] + H2O = L-glutamyl-[protein] + NH4(+). Functionally, probably deamidates glutamine residues to glutamate on methyl-accepting chemotaxis receptors (MCPs), playing an important role in chemotaxis. The polypeptide is Probable chemoreceptor glutamine deamidase CheD (Cereibacter sphaeroides (strain ATCC 17023 / DSM 158 / JCM 6121 / CCUG 31486 / LMG 2827 / NBRC 12203 / NCIMB 8253 / ATH 2.4.1.) (Rhodobacter sphaeroides)).